The primary structure comprises 395 residues: Chalcone synthase 7 (395 aa).

C169 is a catalytic residue.

It belongs to the thiolase-like superfamily. Chalcone/stilbene synthases family.

It carries out the reaction (E)-4-coumaroyl-CoA + 3 malonyl-CoA + 3 H(+) = 2',4,4',6'-tetrahydroxychalcone + 3 CO2 + 4 CoA. The protein operates within secondary metabolite biosynthesis; flavonoid biosynthesis. The primary product of this enzyme is 4,2',4',6'-tetrahydroxychalcone (also termed naringenin-chalcone or chalcone) which can under specific conditions spontaneously isomerize into naringenin. This Picea mariana (Black spruce) protein is Chalcone synthase 7 (CSF7).